A 242-amino-acid polypeptide reads, in one-letter code: Probable 2-phosphosulfolactate phosphatase (242 aa).

This sequence belongs to the ComB family. Mg(2+) is required as a cofactor.

The enzyme catalyses (2R)-O-phospho-3-sulfolactate + H2O = (2R)-3-sulfolactate + phosphate. This is Probable 2-phosphosulfolactate phosphatase from Caldicellulosiruptor saccharolyticus (strain ATCC 43494 / DSM 8903 / Tp8T 6331).